A 381-amino-acid polypeptide reads, in one-letter code: Subtilisin J (381 aa).

The first 29 residues, 1-29 (MRSKKLWISLLFALTLIFTMAFSNMSVQA), serve as a signal peptide directing secretion. The propeptide occupies 30 to 106 (AGKSSTEKKY…VEEDHIAHEY (77 aa)). The 66-residue stretch at 38 to 103 (KYIVGFKQTM…VAYVEEDHIA (66 aa)) folds into the Inhibitor I9 domain. Q108 is a binding site for Ca(2+). Positions 111–380 (PYGISQIKAP…KGLINVQAAA (270 aa)) constitute a Peptidase S8 domain. D138 functions as the Charge relay system in the catalytic mechanism. Position 147 (D147) interacts with Ca(2+). Residue H170 is the Charge relay system of the active site. 7 residues coordinate Ca(2+): L181, N183, I185, V187, A275, Y277, and T280. S327 (charge relay system) is an active-site residue.

This sequence belongs to the peptidase S8 family. The cofactor is Ca(2+).

The protein resides in the secreted. It carries out the reaction Hydrolysis of proteins with broad specificity for peptide bonds, and a preference for a large uncharged residue in P1. Hydrolyzes peptide amides.. In terms of biological role, subtilisin is an extracellular alkaline serine protease, it catalyzes the hydrolysis of proteins and peptide amides. This is Subtilisin J (aprJ) from Geobacillus stearothermophilus (Bacillus stearothermophilus).